The following is a 545-amino-acid chain: B3 domain-containing protein Os03g0620500 (545 aa).

The TF-B3 1 DNA-binding region spans 26–119 (MKCFHRQMSA…RRASGVQERN (94 aa)). Positions 111 to 188 (RASGVQERNA…SSSEHESSYD (78 aa)) are disordered. Over residues 173–186 (EEAKESSSSEHESS) the composition is skewed to basic and acidic residues. The TF-B3 2 DNA-binding region spans 231 to 331 (VTTMKHSNVN…RATVHLLRET (101 aa)). A disordered region spans residues 368–400 (RRGTMEPSTTNVKKEADNEQCNNGQGKRQEPLN). A DNA-binding region (TF-B3 3) is located at residues 441–542 (YVSIMNKSNV…AMKVHIIRHN (102 aa)).

It is found in the nucleus. The sequence is that of B3 domain-containing protein Os03g0620500 from Oryza sativa subsp. japonica (Rice).